The following is a 148-amino-acid chain: Transcriptional regulator MraZ (148 aa).

SpoVT-AbrB domains are found at residues 5–53 (ETAI…AESE) and 82–125 (AAHL…SEQA).

The protein belongs to the MraZ family. In terms of assembly, forms oligomers.

It localises to the cytoplasm. The protein localises to the nucleoid. The chain is Transcriptional regulator MraZ from Stenotrophomonas maltophilia (strain R551-3).